A 513-amino-acid polypeptide reads, in one-letter code: ATP synthase subunit alpha (513 aa).

An ATP-binding site is contributed by 169–176 (GDRQTGKT).

The protein belongs to the ATPase alpha/beta chains family. In terms of assembly, F-type ATPases have 2 components, CF(1) - the catalytic core - and CF(0) - the membrane proton channel. CF(1) has five subunits: alpha(3), beta(3), gamma(1), delta(1), epsilon(1). CF(0) has three main subunits: a(1), b(2) and c(9-12). The alpha and beta chains form an alternating ring which encloses part of the gamma chain. CF(1) is attached to CF(0) by a central stalk formed by the gamma and epsilon chains, while a peripheral stalk is formed by the delta and b chains.

The protein resides in the cell inner membrane. The enzyme catalyses ATP + H2O + 4 H(+)(in) = ADP + phosphate + 5 H(+)(out). Produces ATP from ADP in the presence of a proton gradient across the membrane. The alpha chain is a regulatory subunit. This chain is ATP synthase subunit alpha, found in Vibrio cholerae serotype O1 (strain ATCC 39541 / Classical Ogawa 395 / O395).